The chain runs to 804 residues: Leucine--tRNA ligase (804 aa).

Residues 39–50 (PYPSGAGLHVGH) carry the 'HIGH' region motif. A 'KMSKS' region motif is present at residues 580–584 (KMSKS). Residue Lys583 coordinates ATP.

This sequence belongs to the class-I aminoacyl-tRNA synthetase family.

It localises to the cytoplasm. It carries out the reaction tRNA(Leu) + L-leucine + ATP = L-leucyl-tRNA(Leu) + AMP + diphosphate. The chain is Leucine--tRNA ligase from Mycoplasma mycoides subsp. mycoides SC (strain CCUG 32753 / NCTC 10114 / PG1).